The chain runs to 333 residues: Probable cytosolic iron-sulfur protein assembly protein ciao1 (333 aa).

WD repeat units follow at residues H14–K53, G59–I98, G103–C142, S148–C187, G192–S231, Y246–Q285, and A297–E333.

The protein belongs to the WD repeat CIA1 family. Component of the CIA complex.

Its function is as follows. Key component of the cytosolic iron-sulfur protein assembly (CIA) complex, a multiprotein complex that mediates the incorporation of iron-sulfur cluster into extramitochondrial Fe/S proteins. The chain is Probable cytosolic iron-sulfur protein assembly protein ciao1 (ciao1) from Xenopus tropicalis (Western clawed frog).